Here is a 309-residue protein sequence, read N- to C-terminus: Curved DNA-binding protein (309 aa).

The J domain maps to 5 to 69; sequence DYYAILGVKP…ERRAEYDQLR (65 aa).

Its subcellular location is the cytoplasm. The protein resides in the nucleoid. Its function is as follows. DNA-binding protein that preferentially recognizes a curved DNA sequence. It is probably a functional analog of DnaJ; displays overlapping activities with DnaJ, but functions under different conditions, probably acting as a molecular chaperone in an adaptive response to environmental stresses other than heat shock. Lacks autonomous chaperone activity; binds native substrates and targets them for recognition by DnaK. Its activity is inhibited by the binding of CbpM. This chain is Curved DNA-binding protein, found in Serratia proteamaculans (strain 568).